Here is a 1025-residue protein sequence, read N- to C-terminus: Error-prone DNA polymerase (1025 aa).

Belongs to the DNA polymerase type-C family. DnaE2 subfamily.

The protein resides in the cytoplasm. It carries out the reaction DNA(n) + a 2'-deoxyribonucleoside 5'-triphosphate = DNA(n+1) + diphosphate. In terms of biological role, DNA polymerase involved in damage-induced mutagenesis and translesion synthesis (TLS). It is not the major replicative DNA polymerase. This Pseudomonas fluorescens (strain Pf0-1) protein is Error-prone DNA polymerase.